The sequence spans 208 residues: MARNINPKCRQCRREGEKLFLKGDKCFSDKCPIERRNYPPGQHGQKKVRLSDYAVQLREKQKIRRIYGLLENQFRNVYKRADKQKGVTGDNLLQLLESRLDNVAYNMGFGSSRSEARQIVRHNCVLLNGKRANIPSHLVEPGDLIEIAEHAKSYLRIKASIEAAKRRSIPSWLEVDFDNLKGLYKSKPERSDLSSTINESLVVELYSK.

Residues 98–159 (SRLDNVAYNM…HAKSYLRIKA (62 aa)) form the S4 RNA-binding domain.

Belongs to the universal ribosomal protein uS4 family. In terms of assembly, part of the 30S ribosomal subunit. Contacts protein S5. The interaction surface between S4 and S5 is involved in control of translational fidelity.

In terms of biological role, one of the primary rRNA binding proteins, it binds directly to 16S rRNA where it nucleates assembly of the body of the 30S subunit. With S5 and S12 plays an important role in translational accuracy. This chain is Small ribosomal subunit protein uS4A (rpsD1), found in Nitrosomonas europaea (strain ATCC 19718 / CIP 103999 / KCTC 2705 / NBRC 14298).